We begin with the raw amino-acid sequence, 432 residues long: Monoacylglycerol lipase ABHD2 (432 aa).

Topologically, residues 1–14 (MNTHESEVYTVAPE) are cytoplasmic. A helical; Signal-anchor for type II membrane protein membrane pass occupies residues 15–35 (MPAMFDGMKLAAVATVLYVIV). Residues 36-432 (RCLNLKSPTA…NQTTCQENTS (397 aa)) lie on the Extracellular side of the membrane. The region spanning 132–383 (TMVICPGIGN…HGGHLGFFEG (252 aa)) is the AB hydrolase-1 domain. N-linked (GlcNAc...) asparagine glycosylation is present at asparagine 141. Serine 212 (nucleophile) is an active-site residue. A glycan (N-linked (GlcNAc...) asparagine) is linked at asparagine 225. Catalysis depends on charge relay system residues aspartate 346 and histidine 377. A disordered region spans residues 413-432 (PPCQSKDAQSNQTTCQENTS). Over residues 418–432 (KDAQSNQTTCQENTS) the composition is skewed to polar residues. N-linked (GlcNAc...) asparagine glycosylation is present at asparagine 423.

Belongs to the AB hydrolase superfamily. AB hydrolase 4 family.

The protein resides in the cell membrane. The enzyme catalyses Hydrolyzes glycerol monoesters of long-chain fatty acids.. The catalysed reaction is an acetyl ester + H2O = an aliphatic alcohol + acetate + H(+). It carries out the reaction a triacylglycerol + H2O = a diacylglycerol + a fatty acid + H(+). It catalyses the reaction 2-(5Z,8Z,11Z,14Z-eicosatetraenoyl)-glycerol + H2O = glycerol + (5Z,8Z,11Z,14Z)-eicosatetraenoate + H(+). The enzyme catalyses a butanoate ester + H2O = an aliphatic alcohol + butanoate + H(+). The catalysed reaction is hexadecanoate ester + H2O = an aliphatic alcohol + hexadecanoate + H(+). Its activity is regulated as follows. Acylglycerol lipase activity is activated upon binding to progesterone. Progesterone-dependent acylglycerol lipase that catalyzes hydrolysis of endocannabinoid arachidonoylglycerol (AG) from cell membrane. Acts as a progesterone receptor: progesterone-binding activates the acylglycerol lipase activity, mediating degradation of 1-arachidonoylglycerol (1AG) and 2-arachidonoylglycerol (2AG) to glycerol and arachidonic acid (AA). Also displays an ester hydrolase activity against acetyl ester, butanoate ester and hexadecanoate ester. Plays a key role in sperm capacitation in response to progesterone by mediating degradation of 2AG, an inhibitor of the sperm calcium channel CatSper, leading to calcium influx via CatSper and sperm activation. May also play a role in smooth muscle cells migration. The chain is Monoacylglycerol lipase ABHD2 (abhd2a) from Danio rerio (Zebrafish).